The sequence spans 191 residues: UPF0312 protein Shewmr7_1249 (191 aa).

An N-terminal signal peptide occupies residues 1–22 (MKKQLLAALIGGFLLAPMAASA).

It belongs to the UPF0312 family. Type 1 subfamily.

It is found in the periplasm. The polypeptide is UPF0312 protein Shewmr7_1249 (Shewanella sp. (strain MR-7)).